Reading from the N-terminus, the 251-residue chain is Ubiquinone biosynthesis O-methyltransferase (251 aa).

Positions 36, 61, 82, and 124 each coordinate S-adenosyl-L-methionine.

It belongs to the methyltransferase superfamily. UbiG/COQ3 family.

It catalyses the reaction a 3-demethylubiquinol + S-adenosyl-L-methionine = a ubiquinol + S-adenosyl-L-homocysteine + H(+). It carries out the reaction a 3-(all-trans-polyprenyl)benzene-1,2-diol + S-adenosyl-L-methionine = a 2-methoxy-6-(all-trans-polyprenyl)phenol + S-adenosyl-L-homocysteine + H(+). It functions in the pathway cofactor biosynthesis; ubiquinone biosynthesis. Its function is as follows. O-methyltransferase that catalyzes the 2 O-methylation steps in the ubiquinone biosynthetic pathway. This chain is Ubiquinone biosynthesis O-methyltransferase, found in Rickettsia akari (strain Hartford).